A 274-amino-acid chain; its full sequence is 3-methyl-2-oxobutanoate hydroxymethyltransferase (274 aa).

2 residues coordinate Mg(2+): Asp-49 and Asp-88. 3-methyl-2-oxobutanoate is bound by residues 49-50, Asp-88, and Lys-118; that span reads DS. Glu-120 is a Mg(2+) binding site. The active-site Proton acceptor is the Glu-187.

It belongs to the PanB family. Homodecamer; pentamer of dimers. Mg(2+) serves as cofactor.

Its subcellular location is the cytoplasm. It carries out the reaction 3-methyl-2-oxobutanoate + (6R)-5,10-methylene-5,6,7,8-tetrahydrofolate + H2O = 2-dehydropantoate + (6S)-5,6,7,8-tetrahydrofolate. It participates in cofactor biosynthesis; (R)-pantothenate biosynthesis; (R)-pantoate from 3-methyl-2-oxobutanoate: step 1/2. In terms of biological role, catalyzes the reversible reaction in which hydroxymethyl group from 5,10-methylenetetrahydrofolate is transferred onto alpha-ketoisovalerate to form ketopantoate. In Rhodopseudomonas palustris (strain ATCC BAA-98 / CGA009), this protein is 3-methyl-2-oxobutanoate hydroxymethyltransferase.